Reading from the N-terminus, the 593-residue chain is Arginine--tRNA ligase (593 aa).

The short motif at 138–148 (ANPTGPLHVGH) is the 'HIGH' region element.

This sequence belongs to the class-I aminoacyl-tRNA synthetase family. In terms of assembly, monomer.

It is found in the cytoplasm. The enzyme catalyses tRNA(Arg) + L-arginine + ATP = L-arginyl-tRNA(Arg) + AMP + diphosphate. The protein is Arginine--tRNA ligase of Burkholderia orbicola (strain MC0-3).